A 178-amino-acid chain; its full sequence is ATP synthase subunit delta (178 aa).

It belongs to the ATPase delta chain family. F-type ATPases have 2 components, F(1) - the catalytic core - and F(0) - the membrane proton channel. F(1) has five subunits: alpha(3), beta(3), gamma(1), delta(1), epsilon(1). F(0) has three main subunits: a(1), b(2) and c(10-14). The alpha and beta chains form an alternating ring which encloses part of the gamma chain. F(1) is attached to F(0) by a central stalk formed by the gamma and epsilon chains, while a peripheral stalk is formed by the delta and b chains.

It localises to the cell inner membrane. Functionally, f(1)F(0) ATP synthase produces ATP from ADP in the presence of a proton or sodium gradient. F-type ATPases consist of two structural domains, F(1) containing the extramembraneous catalytic core and F(0) containing the membrane proton channel, linked together by a central stalk and a peripheral stalk. During catalysis, ATP synthesis in the catalytic domain of F(1) is coupled via a rotary mechanism of the central stalk subunits to proton translocation. Its function is as follows. This protein is part of the stalk that links CF(0) to CF(1). It either transmits conformational changes from CF(0) to CF(1) or is implicated in proton conduction. This is ATP synthase subunit delta from Pseudomonas putida (strain W619).